A 281-amino-acid chain; its full sequence is Thioesterase PikA5 (281 aa).

Residues 26 to 249 (RLVCLPHAGG…WHEICNDISD (224 aa)) form a thioesterase region. Catalysis depends on Ser99, which acts as the Nucleophile; for thioesterase activity. His233 acts as the Proton acceptor; for thioesterase activity in catalysis.

This sequence belongs to the thioesterase family.

It functions in the pathway antibiotic biosynthesis. Its function is as follows. Involved in the biosynthesis of 12- and 14-membered ring macrolactone antibiotics such as methymycin, neomethymycin, narbomycin and pikromycin. Responsible for removing mis-formed acyl moieties (aberrant decarboxylation) that are bound to the PKS and could block it. Catalyzes the cleavage of methylmalonyl-[acp]. It exhibits some acyl-group specificity, and catalyzes the cleavage of propionyl and butyryl derivatives faster than acetyl malonyl or methylmalonyl derivatives. This chain is Thioesterase PikA5, found in Streptomyces venezuelae.